Consider the following 1224-residue polypeptide: MNSRKSLSQPSFSNKVIDKNQLKNLIVWAFRNYGIARAANMADKLKDLGFHYATQAGISLSLEDLRIPPSKKSLLLSTIEEIKNTENKYRRGEITTVERFQKVIDTWNNASESLKQEVIEYFKETDPLNSVYMMAFSGARGNISQVRQLVGMRGLMADPQGQIIDLPISSNSREGLTVTDYFISSYGARKGLVDTALRTADSGYLTRRLVDVSQDVIIREVDCKTKKGIILEDLVDTQKVLINLEQALAGRVLAENVFHPEKGSLIAHTRQDISPNLAQEIVRAGIKKVLVRSPVTCNSRSSVCQYCYGWNLAHGRLVDLGEAVGIIAAQSIGEPGTQLAMRTFHTGGVFTGELAEQIYSPIDGKLTNLDFLSYMEVRTRHGEQALMTEKPTQVIIESSGKQKSIINLSKGTTLLVDNNEVVSKDQVIAESPRRNRLMIERAQKHVLSDLSGKICFSNLTVEETDNNQYTTRITKTGGLIWVLSGEVYNIPDSANIPVNKADQVNPGTILAQTELINQYSGKVRIYQNTSSSITNIQIITESVTVPACYIRTDVINKKESYILETDKKQRFLFKSFPDQKISDGHIVAELISDTYKTTSGGIIKYLDLNVSKKKTGPEKDAYDILSPGYILWISEETHEINKDSSLLLVNNGDVIESGTELVKNIFSKSSGIIEIIQKDGIVREIIIKPGFIYKLTDFYSIHDKSRGFLRPGETLHGNISTDKLVYWEYIENEQTPYILIRPVIVYSIPEIKSSLIENLTSQKVNQTKLKLVKRTVFRDGERVKSIDGVHLVTTNLVAEINHHDPNLVSAIEFLAKEDSSNCFALGLSTFETLSIKSIDNKVEKEQSQTRIIVSDGEYIQPLTVVASTEIISMSKGFVEEIHVEKNTSRRILLTTSIDNKVFDLHQQNTLVQVGDWIRCGDLISESIISLDSGQITHISQESATLRIARPYLVSNAAILHVDNNALIRKGETLAVLVFDRAKTGDIIQGLPRIEEILEARKKTDVLLNPHDILDASFNLYIECGLALYEAARLSFQEIQLLLVKEVQLVYQSQGVNISDKHIEVIVRQMTSKVKIENGEETGYLPGELVELQKIEQTNKSMTSRNKLNASYRPILLGITQASLNTESFISAASFQETTKVLTEAAISGKLDWLRGLKENVIIGRLIPAGTGFNMYDSHNDVANKKDINKNISTDNSPPSVRDDLDDIILDDRTARNYFNNKTVD.

The Zn(2+) site is built by Cys-223, Cys-297, Cys-304, and Cys-307.

Belongs to the RNA polymerase beta' chain family. RpoC2 subfamily. In plastids the minimal PEP RNA polymerase catalytic core is composed of four subunits: alpha, beta, beta', and beta''. When a (nuclear-encoded) sigma factor is associated with the core the holoenzyme is formed, which can initiate transcription. The cofactor is Zn(2+).

It localises to the plastid. The protein resides in the chloroplast. It carries out the reaction RNA(n) + a ribonucleoside 5'-triphosphate = RNA(n+1) + diphosphate. Functionally, DNA-dependent RNA polymerase catalyzes the transcription of DNA into RNA using the four ribonucleoside triphosphates as substrates. The sequence is that of DNA-directed RNA polymerase subunit beta'' from Porphyra purpurea (Red seaweed).